The chain runs to 588 residues: Proteasome-associated ATPase (588 aa).

Over residues 1–10 (MAAHDDDMNR) the composition is skewed to basic and acidic residues. Residues 1–23 (MAAHDDDMNRGIRPGRGSDDPAG) are disordered. The stretch at 47–94 (RILEERIVELQTNLAGVSAQNERLANTLREARDQIVALKEEVDRLAQP) forms a coiled coil. ATP is bound at residue 276–281 (GCGKTL). A docks into pockets in the proteasome alpha-ring region spans residues 587–588 (YL).

It belongs to the AAA ATPase family. Homohexamer. Assembles into a hexameric ring structure that caps the 20S proteasome core. Strongly interacts with the prokaryotic ubiquitin-like protein Pup through a hydrophobic interface; the interacting region of ARC lies in its N-terminal coiled-coil domain. There is one Pup binding site per ARC hexamer ring. Upon ATP-binding, the C-terminus of ARC interacts with the alpha-rings of the proteasome core, possibly by binding to the intersubunit pockets.

Its pathway is protein degradation; proteasomal Pup-dependent pathway. In terms of biological role, ATPase which is responsible for recognizing, binding, unfolding and translocation of pupylated proteins into the bacterial 20S proteasome core particle. May be essential for opening the gate of the 20S proteasome via an interaction with its C-terminus, thereby allowing substrate entry and access to the site of proteolysis. Thus, the C-termini of the proteasomal ATPase may function like a 'key in a lock' to induce gate opening and therefore regulate proteolysis. The sequence is that of Proteasome-associated ATPase from Streptomyces avermitilis (strain ATCC 31267 / DSM 46492 / JCM 5070 / NBRC 14893 / NCIMB 12804 / NRRL 8165 / MA-4680).